The chain runs to 462 residues: Glutamate--tRNA ligase 1 (462 aa).

A 'HIGH' region motif is present at residues 8–18; the sequence is PSPTGYLHIGG. Positions 237 to 241 match the 'KMSKS' region motif; it reads KLSKR. Residue K240 participates in ATP binding.

The protein belongs to the class-I aminoacyl-tRNA synthetase family. Glutamate--tRNA ligase type 1 subfamily. As to quaternary structure, monomer.

The protein resides in the cytoplasm. It carries out the reaction tRNA(Glu) + L-glutamate + ATP = L-glutamyl-tRNA(Glu) + AMP + diphosphate. Catalyzes the attachment of glutamate to tRNA(Glu) in a two-step reaction: glutamate is first activated by ATP to form Glu-AMP and then transferred to the acceptor end of tRNA(Glu). This chain is Glutamate--tRNA ligase 1, found in Sulfurimonas denitrificans (strain ATCC 33889 / DSM 1251) (Thiomicrospira denitrificans (strain ATCC 33889 / DSM 1251)).